The primary structure comprises 904 residues: Trichohyalin-like protein 1 (904 aa).

The 36-residue stretch at 48-83 (CVLHAVEKNSNLLNIDSNGIISFDEFVLAIFNLLNL) folds into the EF-hand domain. Disordered regions lie at residues 102–792 (PEKE…CSVE) and 858–890 (PYTR…HPQR). The segment covering 113–128 (QATTGDGQWTVGTSPT) has biased composition (polar residues). Composition is skewed to basic and acidic residues over residues 172–185 (ASEH…HLEG), 222–240 (TERK…EPAR), 268–300 (ATQR…DEPS), 349–371 (NLGE…ETKD), and 385–398 (SDMR…RGPE). The segment covering 443–452 (ETQYLSSEGG) has biased composition (polar residues). Residues 524–536 (VEEEDGYQGEDPE) show a composition bias toward acidic residues. Residues 538 to 554 (PFTQSDEGSSETPNSLA) are compositionally biased toward polar residues. Low complexity predominate over residues 555–578 (SEEGNSSSETGELPVQGDSQSQGD). The segment covering 586–598 (GGHNNNPDTQRQG) has biased composition (polar residues). The segment covering 759–770 (GDQKSPAKKEHN) has biased composition (basic and acidic residues). A compositionally biased stretch (polar residues) spans 771 to 780 (SSVPWSSLEK). Positions 881-890 (LEDKQGHPQR) are enriched in basic and acidic residues.

The protein belongs to the S-100 family.

The polypeptide is Trichohyalin-like protein 1 (TCHHL1) (Homo sapiens (Human)).